Reading from the N-terminus, the 213-residue chain is Imidazole glycerol phosphate synthase subunit HisH 1 (213 aa).

The Glutamine amidotransferase type-1 domain occupies 3 to 213; the sequence is SVSILDYGVG…LSIIQQFLQI (211 aa). Cys-81 serves as the catalytic Nucleophile. Catalysis depends on residues His-195 and Glu-197.

Heterodimer of HisH and HisF.

The protein resides in the cytoplasm. It catalyses the reaction 5-[(5-phospho-1-deoxy-D-ribulos-1-ylimino)methylamino]-1-(5-phospho-beta-D-ribosyl)imidazole-4-carboxamide + L-glutamine = D-erythro-1-(imidazol-4-yl)glycerol 3-phosphate + 5-amino-1-(5-phospho-beta-D-ribosyl)imidazole-4-carboxamide + L-glutamate + H(+). It carries out the reaction L-glutamine + H2O = L-glutamate + NH4(+). Its pathway is amino-acid biosynthesis; L-histidine biosynthesis; L-histidine from 5-phospho-alpha-D-ribose 1-diphosphate: step 5/9. Its function is as follows. IGPS catalyzes the conversion of PRFAR and glutamine to IGP, AICAR and glutamate. The HisH subunit provides the glutamine amidotransferase activity that produces the ammonia necessary to HisF for the synthesis of IGP and AICAR. The protein is Imidazole glycerol phosphate synthase subunit HisH 1 of Legionella pneumophila (strain Lens).